The sequence spans 396 residues: uncharacterized protein (396 aa).

2 helical membrane passes run 27–47 and 69–89; these read LLIA…QICL and FIVL…NVTF. The HXXXXD motif motif lies at 117-122; the sequence is HQMYAD. 2 helical membrane-spanning segments follow: residues 123–143 and 372–392; these read WIYL…YIIL and LTPR…VFVM.

Belongs to the 1-acyl-sn-glycerol-3-phosphate acyltransferase family.

The protein localises to the membrane. This is an uncharacterized protein from Saccharomyces cerevisiae (strain ATCC 204508 / S288c) (Baker's yeast).